The chain runs to 663 residues: Chaperone protein HtpG (663 aa).

Residues 1 to 352 are a; substrate-binding; sequence MTKQTLSFQA…SADLPLNVSR (352 aa). The span at 218 to 228 shows a compositional bias: basic and acidic residues; it reads ELINPSDEKGG. The interval 218-237 is disordered; sequence ELINPSDEKGGRQPGGMVKT. Residues 353-595 are b; sequence ELLQESRDVK…DHGMSTQLAR (243 aa). Residues 596–663 form a c region; sequence MLKQAGQAAP…YVKRVNALLV (68 aa).

Belongs to the heat shock protein 90 family. As to quaternary structure, homodimer.

Its subcellular location is the cytoplasm. Functionally, molecular chaperone. Has ATPase activity. This is Chaperone protein HtpG from Albidiferax ferrireducens (strain ATCC BAA-621 / DSM 15236 / T118) (Rhodoferax ferrireducens).